A 380-amino-acid chain; its full sequence is Transmembrane protein 229A (380 aa).

The tract at residues 1–40 is disordered; that stretch reads MAGSDVDSEGPARRGGAARRPGAPGGPGSEAAAGCPEPLS. 2 consecutive transmembrane segments (helical) span residues 51–71 and 117–137; these read LPAW…DVLV and AFVF…TLAG. Positions 188–236 are disordered; it reads RQQQQQQQQQQQQRRGALPVPPGARVPTAAGARRRRPRGPRGAGGAPSQ. The segment covering 190 to 202 has biased composition (low complexity); it reads QQQQQQQQQQQRR. The next 4 membrane-spanning stretches (helical) occupy residues 244–264, 278–298, 310–330, and 343–363; these read FLFF…FFNV, LWSF…YFHL, VPIY…GLRT, and LNFM…LSVY.

The protein belongs to the TMEM229 family.

The protein resides in the membrane. In Homo sapiens (Human), this protein is Transmembrane protein 229A (TMEM229A).